A 349-amino-acid polypeptide reads, in one-letter code: tRNA pseudouridine synthase D (349 aa).

Phe26 lines the substrate pocket. Catalysis depends on Asp79, which acts as the Nucleophile. Asn128 lines the substrate pocket. The region spanning 154-303 is the TRUD domain; sequence GVPNYFGSQR…VDAARRAMLV (150 aa). Phe329 serves as a coordination point for substrate.

This sequence belongs to the pseudouridine synthase TruD family.

It catalyses the reaction uridine(13) in tRNA = pseudouridine(13) in tRNA. Functionally, responsible for synthesis of pseudouridine from uracil-13 in transfer RNAs. This chain is tRNA pseudouridine synthase D, found in Erwinia tasmaniensis (strain DSM 17950 / CFBP 7177 / CIP 109463 / NCPPB 4357 / Et1/99).